A 210-amino-acid chain; its full sequence is Large ribosomal subunit protein uL4 (210 aa).

Positions 49-76 (HCTKTRSEVSGGGKKPWRQKHTGRARHG) are disordered. The segment covering 63–76 (KPWRQKHTGRARHG) has biased composition (basic residues).

The protein belongs to the universal ribosomal protein uL4 family. In terms of assembly, part of the 50S ribosomal subunit.

Functionally, one of the primary rRNA binding proteins, this protein initially binds near the 5'-end of the 23S rRNA. It is important during the early stages of 50S assembly. It makes multiple contacts with different domains of the 23S rRNA in the assembled 50S subunit and ribosome. In terms of biological role, forms part of the polypeptide exit tunnel. This Thermodesulfovibrio yellowstonii (strain ATCC 51303 / DSM 11347 / YP87) protein is Large ribosomal subunit protein uL4.